A 182-amino-acid polypeptide reads, in one-letter code: UPF0316 protein lp_1140 (182 aa).

The next 3 helical transmembrane spans lie at 1–21 (MHID…YITL), 36–56 (FAAF…SLVL), and 62–82 (PINL…GMVI).

Belongs to the UPF0316 family.

The protein resides in the cell membrane. In Lactiplantibacillus plantarum (strain ATCC BAA-793 / NCIMB 8826 / WCFS1) (Lactobacillus plantarum), this protein is UPF0316 protein lp_1140.